A 183-amino-acid polypeptide reads, in one-letter code: Putative lipoprotein LpqE (183 aa).

A signal peptide spans 1-30 (MSRFKISLPALATRVAVLGFLTLMASVLGG). Cys-31 is lipidated: N-palmitoyl cysteine. The S-diacylglycerol cysteine moiety is linked to residue Cys-31.

It localises to the cell membrane. This is Putative lipoprotein LpqE (lpqE) from Mycobacterium leprae (strain TN).